The following is a 349-amino-acid chain: Ion-translocating oxidoreductase complex subunit D (349 aa).

3 helical membrane passes run 20–42 (VMQRVILCLLPGLVVQCAFFGWG), 77–99 (SAMLTAILIGVAIPPLAPWWMIV), and 124–144 (AMAAYVLLLVSFPVQMTTWIA). Thr185 bears the FMN phosphoryl threonine mark. A run of 5 helical transmembrane segments spans residues 212 to 232 (STGVGWFWVNLAYLAGGLVLL), 239 to 259 (WHISTGVLLGLFVASSIGFLL), 265 to 285 (ASPLMHLFSGATMLAAFFIAT), 291 to 311 (ATSPRGRIIFGALIGVLVYII), and 315 to 335 (GGYPDAFAFAVLLANLCAPFI).

The protein belongs to the NqrB/RnfD family. The complex is composed of six subunits: RnfA, RnfB, RnfC, RnfD, RnfE and RnfG. Requires FMN as cofactor.

The protein resides in the cell inner membrane. Its function is as follows. Part of a membrane-bound complex that couples electron transfer with translocation of ions across the membrane. The sequence is that of Ion-translocating oxidoreductase complex subunit D from Shewanella baltica (strain OS185).